Consider the following 204-residue polypeptide: LexA repressor (204 aa).

A DNA-binding region (H-T-H motif) is located at residues 29–49 (RAEIADIMGFQSKNAASDHLR). Residues Ser123 and Lys160 each act as for autocatalytic cleavage activity in the active site.

It belongs to the peptidase S24 family. As to quaternary structure, homodimer.

It catalyses the reaction Hydrolysis of Ala-|-Gly bond in repressor LexA.. Represses a number of genes involved in the response to DNA damage (SOS response), including recA and lexA. In the presence of single-stranded DNA, RecA interacts with LexA causing an autocatalytic cleavage which disrupts the DNA-binding part of LexA, leading to derepression of the SOS regulon and eventually DNA repair. The polypeptide is LexA repressor (Alcanivorax borkumensis (strain ATCC 700651 / DSM 11573 / NCIMB 13689 / SK2)).